Here is a 447-residue protein sequence, read N- to C-terminus: Glutamate--tRNA ligase 2 (447 aa).

The short motif at 9–19 (PSPTGYLHIGN) is the 'HIGH' region element. Residues 240-244 (GLSKR) carry the 'KMSKS' region motif. An ATP-binding site is contributed by Lys243.

This sequence belongs to the class-I aminoacyl-tRNA synthetase family. Glutamate--tRNA ligase type 1 subfamily. In terms of assembly, monomer.

Its subcellular location is the cytoplasm. It carries out the reaction tRNA(Glu) + L-glutamate + ATP = L-glutamyl-tRNA(Glu) + AMP + diphosphate. Functionally, catalyzes the attachment of glutamate to tRNA(Glu) in a two-step reaction: glutamate is first activated by ATP to form Glu-AMP and then transferred to the acceptor end of tRNA(Glu). The protein is Glutamate--tRNA ligase 2 of Methylobacterium sp. (strain 4-46).